Reading from the N-terminus, the 741-residue chain is Phage T7 exclusion protein (741 aa).

Residues 27 to 334 (FGNIAENISR…NSLIFLYPGM (308 aa)) form the KAP NTPase domain.

In terms of biological role, responsible for the exclusion of phage T7 by plasmid F. Growth of bacteriophage T7 is inhibited in cells of E.coli that carries the plasmid F. The chain is Phage T7 exclusion protein (pifA) from Escherichia coli (strain K12).